A 185-amino-acid chain; its full sequence is MAEAKALPRFKKLYQDNIRKALLEEFKYDNEMQIPRITKVVLNMGVGEATGDSKKPAVAAEDLAMIAGQKAVVTRARNSIATFKLREGMPIGAKVTLRQDRMYEFLDRLITIALPRVRDFRGLNPKSFDGRGNYAMGIKEHIVFPEINYDKVDQIWGMDIIVCTTAKTDDEARSLLRAFNFPFRQ.

This sequence belongs to the universal ribosomal protein uL5 family. As to quaternary structure, part of the 50S ribosomal subunit; part of the 5S rRNA/L5/L18/L25 subcomplex. Contacts the 5S rRNA and the P site tRNA. Forms a bridge to the 30S subunit in the 70S ribosome.

Functionally, this is one of the proteins that bind and probably mediate the attachment of the 5S RNA into the large ribosomal subunit, where it forms part of the central protuberance. In the 70S ribosome it contacts protein S13 of the 30S subunit (bridge B1b), connecting the 2 subunits; this bridge is implicated in subunit movement. Contacts the P site tRNA; the 5S rRNA and some of its associated proteins might help stabilize positioning of ribosome-bound tRNAs. This is Large ribosomal subunit protein uL5 from Brucella abortus (strain S19).